The chain runs to 1934 residues: Tudor domain-containing protein 15 (1934 aa).

Tudor domains follow at residues 59-117 (NVEI…LFEL), 289-347 (CDNF…FILV), 531-589 (KPEP…FCEL), 799-856 (PYEI…FLLL), 1011-1070 (DSNK…FPEL), and 1342-1401 (KPLV…FLTV). Residues 1490–1510 (VRPGDNEMKKGKSNESEGSMN) are disordered. Over residues 1491–1504 (RPGDNEMKKGKSNE) the composition is skewed to basic and acidic residues. Tudor domains lie at 1574-1633 (SIEK…IRNI) and 1780-1838 (FIIP…PEEL).

The sequence is that of Tudor domain-containing protein 15 (TDRD15) from Homo sapiens (Human).